Reading from the N-terminus, the 285-residue chain is Putative ankyrin repeat protein R551 (285 aa).

ANK repeat units follow at residues 99-129 (DLKS…PIKI), 157-186 (NDFD…LQDE), 188-214 (IGKI…EAFR), and 215-249 (SAPD…CIQQ).

This Acanthamoeba polyphaga (Amoeba) protein is Putative ankyrin repeat protein R551.